The primary structure comprises 260 residues: HTH-type transcriptional repressor NanR (260 aa).

A disordered region spans residues 1-20 (MNPFDSQSEDASDAIGRSLG). The HTH gntR-type domain maps to 27-95 (KKLSEMVEEE…NGERARVSRP (69 aa)). Positions 55 to 74 (ERELMAFFNVGRPSVREALA) form a DNA-binding region, H-T-H motif.

The protein belongs to the NanR family.

Functionally, transcriptional repressor that controls expression of the genes required for the catabolism of sialic acids. The sequence is that of HTH-type transcriptional repressor NanR from Cronobacter sakazakii (strain ATCC BAA-894) (Enterobacter sakazakii).